The primary structure comprises 226 residues: PKHD-type hydroxylase mma_3618 (226 aa).

Positions 78-178 (RYMPPLFNRY…RISSFFWVQS (101 aa)) constitute a Fe2OG dioxygenase domain. Fe cation contacts are provided by His96, Asp98, and His159. Arg169 provides a ligand contact to 2-oxoglutarate.

Fe(2+) serves as cofactor. It depends on L-ascorbate as a cofactor.

In Janthinobacterium sp. (strain Marseille) (Minibacterium massiliensis), this protein is PKHD-type hydroxylase mma_3618.